A 1222-amino-acid polypeptide reads, in one-letter code: Chitin synthase 4 (1222 aa).

Disordered stretches follow at residues 1 to 101 and 138 to 200; these read MSLP…ERNR and TERT…KRIE. Composition is skewed to polar residues over residues 11–24 and 42–77; these read QAYNQRSVYRNSPS and NQASHQRGKSGSSFAESIGINSNTESMPLSPTSPDG. The span at 182–196 shows a compositional bias: basic residues; the sequence is SGKIKRKSRRHSKPP. Helical transmembrane passes span 205–225 and 243–263; these read PPTFWNVYCAIVTFWAPGFIM and MGLISIILIIMAIVGFLTFGF. Residues N378, N418, and N440 are each glycosylated (N-linked (GlcNAc...) asparagine). Residues 513-533 form a helical membrane-spanning segment; that stretch reads ALILSVVGVRFFLAIIFQWFI. Residues 576–630 are disordered; that stretch reads TVYGSSDRSSKRASFLPTTSRFSSVGGPDIRSQGGRRMPTTMASQSTSNQLLTPN. Over residues 616–630 the composition is skewed to polar residues; sequence TMASQSTSNQLLTPN. 2 N-linked (GlcNAc...) asparagine glycosylation sites follow: N637 and N1030. 3 helical membrane-spanning segments follow: residues 1055 to 1075, 1089 to 1109, and 1113 to 1133; these read FIIFVELVGTLVLPAAIAFTF, IIPLVLLGLILGLPGLLVIIT, and WSYIVWMLIYLLALPIWNFVL. Residues 1202 to 1222 form a disordered region; the sequence is GGQTWTSPPGHQYNEEYYSDA.

The protein belongs to the chitin synthase family. Class IV subfamily.

The protein localises to the cell membrane. The catalysed reaction is [(1-&gt;4)-N-acetyl-beta-D-glucosaminyl](n) + UDP-N-acetyl-alpha-D-glucosamine = [(1-&gt;4)-N-acetyl-beta-D-glucosaminyl](n+1) + UDP + H(+). Polymerizes chitin, a structural polymer of the cell wall and septum, by transferring the sugar moiety of UDP-GlcNAc to the non-reducing end of the growing chitin polymer. Shows additive effects in septum formation with CHS1, CHS2, CHS3A, CHS5, CHS6 and CHS7. Regulates conidiation. Involved in virulence and mediates mycotoxin deoxinivalenol (DON) biosynthesis via the regulation of the expression of TRI4, TRI5 and TRI6. The sequence is that of Chitin synthase 4 from Gibberella zeae (strain ATCC MYA-4620 / CBS 123657 / FGSC 9075 / NRRL 31084 / PH-1) (Wheat head blight fungus).